The sequence spans 82 residues: Putative membrane protein insertion efficiency factor (82 aa).

The protein belongs to the UPF0161 family.

It localises to the cell inner membrane. Its function is as follows. Could be involved in insertion of integral membrane proteins into the membrane. The sequence is that of Putative membrane protein insertion efficiency factor from Aeromonas salmonicida (strain A449).